Reading from the N-terminus, the 83-residue chain is Small ribosomal subunit protein eS21 (83 aa).

Met-1 is modified (N-acetylmethionine). A Glycyl lysine isopeptide (Lys-Gly) (interchain with G-Cter in SUMO2) cross-link involves residue Lys-41.

It belongs to the eukaryotic ribosomal protein eS21 family. Component of the 40S small ribosomal subunit.

Its subcellular location is the cytoplasm. The protein resides in the cytosol. The protein localises to the rough endoplasmic reticulum. In terms of biological role, component of the small ribosomal subunit. The ribosome is a large ribonucleoprotein complex responsible for the synthesis of proteins in the cell. This chain is Small ribosomal subunit protein eS21 (RPS21), found in Oryctolagus cuniculus (Rabbit).